The sequence spans 170 residues: Lipoprotein signal peptidase (170 aa).

A run of 3 helical transmembrane segments spans residues 9-29 (IGSVIFIFILVFIDQWSKYLV), 72-92 (LFFLVIPIIILVFVFCFILKE), and 93-113 (TNKIARIALILILSGGIGNII). Catalysis depends on residues aspartate 124 and aspartate 146. The helical transmembrane segment at 142–162 (FNFADSYVVIGITLFIIYDLF) threads the bilayer.

The protein belongs to the peptidase A8 family.

The protein localises to the cell inner membrane. It carries out the reaction Release of signal peptides from bacterial membrane prolipoproteins. Hydrolyzes -Xaa-Yaa-Zaa-|-(S,diacylglyceryl)Cys-, in which Xaa is hydrophobic (preferably Leu), and Yaa (Ala or Ser) and Zaa (Gly or Ala) have small, neutral side chains.. Its pathway is protein modification; lipoprotein biosynthesis (signal peptide cleavage). Functionally, this protein specifically catalyzes the removal of signal peptides from prolipoproteins. This Borrelia hermsii (strain HS1 / DAH) protein is Lipoprotein signal peptidase.